The following is a 649-amino-acid chain: Ubiquitin-associated and SH3 domain-containing protein B (649 aa).

At Ser-20 the chain carries Phosphoserine. Position 23 is a phosphothreonine (Thr-23). Positions 27–76 constitute a UBA domain; that stretch reads NRQQRPGTIKHGSALDVLLSMGFPRARAQKALASTGGRSVQAACDWLFSH. Positions 254-319 constitute an SH3 domain; sequence ANHETLQVIY…PENYITKADE (66 aa). Positions 380–649 are protein tyrosine phosphatase; sequence GPQKRCLFVC…FNWRETLLQE (270 aa). Arg-390 is a catalytic residue. Catalysis depends on His-391, which acts as the Tele-phosphohistidine intermediate. The active site involves His-576.

In terms of assembly, homodimer. Interacts with JAK2 (in vitro). Interacts with CBL. Part of a complex containing CBL and activated EGFR. Interacts with ubiquitin and with mono-ubiquitinated proteins. Interacts with ZAP70 (ubiquitinated form).

The protein localises to the cytoplasm. It is found in the nucleus. It carries out the reaction O-phospho-L-tyrosyl-[protein] + H2O = L-tyrosyl-[protein] + phosphate. In terms of biological role, interferes with CBL-mediated down-regulation and degradation of receptor-type tyrosine kinases. Promotes accumulation of activated target receptors, such as T-cell receptors and EGFR, on the cell surface. Exhibits tyrosine phosphatase activity toward several substrates including EGFR, FAK, SYK, and ZAP70. Down-regulates proteins that are dually modified by both protein tyrosine phosphorylation and ubiquitination. This chain is Ubiquitin-associated and SH3 domain-containing protein B (UBASH3B), found in Homo sapiens (Human).